The sequence spans 79 residues: Acyl carrier protein (79 aa).

Residues Ser2 to Lys77 enclose the Carrier domain. O-(pantetheine 4'-phosphoryl)serine is present on Ser37.

The protein belongs to the acyl carrier protein (ACP) family. Post-translationally, 4'-phosphopantetheine is transferred from CoA to a specific serine of apo-ACP by AcpS. This modification is essential for activity because fatty acids are bound in thioester linkage to the sulfhydryl of the prosthetic group.

It localises to the cytoplasm. It functions in the pathway lipid metabolism; fatty acid biosynthesis. In terms of biological role, carrier of the growing fatty acid chain in fatty acid biosynthesis. The chain is Acyl carrier protein from Gluconacetobacter diazotrophicus (strain ATCC 49037 / DSM 5601 / CCUG 37298 / CIP 103539 / LMG 7603 / PAl5).